A 533-amino-acid chain; its full sequence is Beta-1,4-mannosyl-glycoprotein 4-beta-N-acetylglucosaminyltransferase (533 aa).

The Cytoplasmic segment spans residues M1–K7. Residues L8–L23 traverse the membrane as a helical; Signal-anchor for type II membrane protein segment. Residues H24–V533 lie on the Lumenal side of the membrane. The disordered stretch occupies residues K119–R158. N-linked (GlcNAc...) asparagine glycans are attached at residues N141, N241, N259, and N397. Residues S507–V533 form a disordered region.

Belongs to the glycosyltransferase 17 family. Interacts with MGAT4D.

It localises to the golgi apparatus membrane. The catalysed reaction is N(4)-{beta-D-GlcNAc-(1-&gt;2)-alpha-D-Man-(1-&gt;3)-[beta-D-GlcNAc-(1-&gt;2)-alpha-D-Man-(1-&gt;6)]-beta-D-Man-(1-&gt;4)-beta-D-GlcNAc-(1-&gt;4)-beta-D-GlcNAc}-L-asparaginyl-[protein] + UDP-N-acetyl-alpha-D-glucosamine = N(4)-{beta-D-GlcNAc-(1-&gt;2)-alpha-D-Man-(1-&gt;3)-[beta-D-GlcNAc-(1-&gt;4)]-[beta-D-GlcNAc-(1-&gt;2)-alpha-D-Man-(1-&gt;6)]-beta-D-Man-(1-&gt;4)-beta-D-GlcNAc-(1-&gt;4)-beta-D-GlcNAc}-L-asparaginyl-[protein] + UDP + H(+). It participates in protein modification; protein glycosylation. Functionally, it is involved in the regulation of the biosynthesis and biological function of glycoprotein oligosaccharides. Catalyzes the addition of N-acetylglucosamine in beta 1-4 linkage to the beta-linked mannose of the trimannosyl core of N-linked sugar chains, called bisecting N-acetylglucosamine (GlcNAc). It is one of the most important enzymes involved in the regulation of the biosynthesis of glycoprotein oligosaccharides. The addition of this bisecting GlcNAc residue alters not only the composition, but also the conformation of the N-glycan. The introduction of the bisecting GlcNAc residue results in the suppression of further processing and elongation of N-glycans, precluding the formation of beta-1,6 GlcNAc branching, catalyzed by MGAT5 since it is unable to use the bisected oligosaccharide as a substrate. Addition of bisecting N-acetylglucosamine to CDH1/E-cadherin modulates CDH1 cell membrane location. Inhibits NeuAc-alpha-2,3-Gal-beta-1,4-GlcNAc- formation which modulates sialylation levels and plays a role in cell migration regulation. In brain, addition of bisecting N-acetylglucosamine to BACE1 blocks its lysosomal targeting in response to oxidative stress and further degradation which increases its location to early endosome and the APP cleavage. The chain is Beta-1,4-mannosyl-glycoprotein 4-beta-N-acetylglucosaminyltransferase from Homo sapiens (Human).